The sequence spans 309 residues: Mas-related G-protein coupled receptor member E (309 aa).

Topologically, residues 1-21 (MSLRVHTHSPSTQGDMAFNLT) are extracellular. An N-linked (GlcNAc...) asparagine glycan is attached at asparagine 19. The helical transmembrane segment at 22–42 (ILSLTELLSLGGLLGNGVALW) threads the bilayer. Topologically, residues 43-59 (LLNQNVYRNPFSIYLLD) are cytoplasmic. A helical membrane pass occupies residues 60 to 80 (VACADLIFLCCHMVAIIPELL). The Extracellular segment spans residues 81–91 (QDQLNFPEFVH). Residues 92–112 (ISLIMLRFFCYIVGLSLLVAI) traverse the membrane as a helical segment. At 113-132 (STEQCLATLFPSGYLCRRPR) the chain is on the cytoplasmic side. A helical transmembrane segment spans residues 133–153 (YLTTCVCAFIWVLCLLLDLLL). Topologically, residues 154–168 (SGACTQFFGAPSYHL) are extracellular. Residues 169 to 189 (CGMLWLVVAVLLAALCCTMCV) form a helical membrane-spanning segment. At 190–212 (TSLLLLLRVERGPERHQPRGFPT) the chain is on the cytoplasmic side. A helical membrane pass occupies residues 213–233 (LVLLVILLFLFCGLPFGIFWL). The Extracellular segment spans residues 234 to 247 (SKNLSWHTPLYFYH). A glycan (N-linked (GlcNAc...) asparagine) is linked at asparagine 236. A helical membrane pass occupies residues 248–268 (FSFFMASVHSAAKPAIYFFLG). Topologically, residues 269–309 (STPGQRFQEPLRLVLQRALGDEAELGAVREASQGGLVDMTV) are cytoplasmic.

Belongs to the G-protein coupled receptor 1 family. Mas subfamily.

The protein resides in the cell membrane. In terms of biological role, orphan receptor. May regulate nociceptor function and/or development, including the sensation or modulation of pain. The protein is Mas-related G-protein coupled receptor member E (Mrgpre) of Rattus norvegicus (Rat).